Here is a 400-residue protein sequence, read N- to C-terminus: uncharacterized protein (400 aa).

Belongs to the mimivirus R640 family.

Its subcellular location is the virion. This is an uncharacterized protein from Acanthamoeba polyphaga (Amoeba).